The sequence spans 287 residues: Very long chain fatty acid elongase 4 (287 aa).

The next 3 helical transmembrane spans lie at 33–53, 64–84, and 115–135; these read ILVY…EHIM, PFVV…YSCV, and FWVF…VFLV. A HxxHH motif motif is present at residues 145–149; that stretch reads HWYHH. His148 (nucleophile) is an active-site residue. 4 helical membrane passes run 150–170, 172–192, 199–219, and 241–261; these read LTVA…GLWF, TMNY…ACGM, IAPF…LIVL, and LGLV…GKLY.

It belongs to the ELO family.

The protein localises to the membrane. It carries out the reaction a very-long-chain acyl-CoA + malonyl-CoA + H(+) = a very-long-chain 3-oxoacyl-CoA + CO2 + CoA. Functionally, involved in the synthesis of fatty acids. Elongates C16:0 and C18:0 fatty acids to C26:0, with C24:0 being the main product. This chain is Very long chain fatty acid elongase 4, found in Trypanosoma cruzi (strain CL Brener).